Here is a 348-residue protein sequence, read N- to C-terminus: Dihydroorotase (348 aa).

H17 and H19 together coordinate Zn(2+). Residues 19-21 (HLR) and N45 contribute to the substrate site. Zn(2+) contacts are provided by K103, H140, and H178. K103 is modified (N6-carboxylysine). H140 is a substrate binding site. L223 is a binding site for substrate. Zn(2+) is bound at residue D251. The active site involves D251. Positions 255 and 267 each coordinate substrate.

Belongs to the metallo-dependent hydrolases superfamily. DHOase family. Class II DHOase subfamily. In terms of assembly, homodimer. Requires Zn(2+) as cofactor.

The catalysed reaction is (S)-dihydroorotate + H2O = N-carbamoyl-L-aspartate + H(+). It participates in pyrimidine metabolism; UMP biosynthesis via de novo pathway; (S)-dihydroorotate from bicarbonate: step 3/3. In terms of biological role, catalyzes the reversible cyclization of carbamoyl aspartate to dihydroorotate. This is Dihydroorotase from Salmonella paratyphi C (strain RKS4594).